An 87-amino-acid chain; its full sequence is Beta-defensin 109C (87 aa).

A signal peptide spans 1–22; that stretch reads MRLHLLLLILLLFSILLSPVRG. Intrachain disulfides connect Cys31-Cys59, Cys38-Cys53, and Cys43-Cys60.

It belongs to the beta-defensin family.

It localises to the secreted. Functionally, has antibacterial activity. This is Beta-defensin 109C (DEFB109C) from Homo sapiens (Human).